The chain runs to 2388 residues: Spectrin beta chain, non-erythrocytic 2 (2388 aa).

Serine 2 is subject to N-acetylserine. An actin-binding region spans residues 2-278; sequence SSTLSPTDFD…IITYVATYYH (277 aa). Phosphoserine occurs at positions 6 and 31. 2 consecutive Calponin-homology (CH) domains span residues 57-161 and 176-281; these read AVQK…LRFQ and KSAK…HYFS. Spectrin repeat units follow at residues 306–414, 427–527, 532–639, 642–744, 749–849, and 856–954; these read LVEK…LALR, AARF…RERL, ELQK…RLEE, RLWR…QRLA, LYQF…RALE, and TMLS…KAAL. Position 959 is a phosphoserine (serine 959). Spectrin repeat units follow at residues 960–1063, 1066–1169, 1174–1266, 1279–1379, 1384–1485, 1489–1586, 1589–1692, 1696–1797, 1801–1904, 1910–2010, and 2017–2078; these read IQNY…SLGE, RLQD…GRLA, FQGF…NQEA, EQQH…ARSL, RAEL…RRLQ, EQHQ…RLEE, RAQQ…RLQE, LCQL…GQVL, YELQ…QLLL, FRFF…DWLQ, and VFGR…LTAL. Serine 1073 carries the phosphoserine modification. Phosphoserine is present on serine 1574. The span at 2080 to 2096 shows a compositional bias: basic and acidic residues; sequence ERENEQKRKREEEERRK. Disordered regions lie at residues 2080-2112 and 2124-2207; these read ERENEQKRKREEEERRKQPPTSEPMASQPEGSL and DGTQ…HVAT. Positions 2124 to 2163 are enriched in polar residues; it reads DGTQSKLPPSTQAPSINGVCTDTESSQPLLEQQRLEQSNV. Phosphoserine occurs at positions 2169 and 2199. Positions 2218 to 2328 constitute a PH domain; sequence QEQMEGTLCR…WLRVVNAAIA (111 aa). A disordered region spans residues 2333-2388; it reads ASGEPEEPVVPSASRGLTRAMTMPPVSQPEGSIVLRSKDGREREREKRFSFFKKNK. Threonine 2354 bears the Phosphothreonine mark. Serine 2359 bears the Phosphoserine mark. Basic and acidic residues predominate over residues 2368 to 2381; it reads RSKDGREREREKRF.

It belongs to the spectrin family. In terms of tissue distribution, abundantly transcribed in the brain. Neurons are the predominant cell-type to express the gene. Found abundantly in Purkinje cells.

The protein localises to the cytoplasm. It localises to the cytoskeleton. It is found in the cell cortex. Its function is as follows. Probably plays an important role in neuronal membrane skeleton. The chain is Spectrin beta chain, non-erythrocytic 2 (Sptbn2) from Rattus norvegicus (Rat).